Here is a 402-residue protein sequence, read N- to C-terminus: Zinc finger CCCH domain-containing protein 35 (402 aa).

2 consecutive C3H1-type zinc fingers follow at residues 117–144 and 152–176; these read CYSGTACPDFRKGGCKRGDACEFAHGVF and RYRTQPCKDGTACRRRVCFFAHTPD. Disordered regions lie at residues 180 to 211 and 232 to 258; these read VLPPSQQQGSNSPRGCGGGGAGAAASPLAESY and SSPTSTLVSPPRSPPSESPPLSPDAAG. Polar residues predominate over residues 183–192; the sequence is PSQQQGSNSP. The span at 232–241 shows a compositional bias: low complexity; it reads SSPTSTLVSP. The span at 242–253 shows a compositional bias: pro residues; the sequence is PRSPPSESPPLS.

In Oryza sativa subsp. japonica (Rice), this protein is Zinc finger CCCH domain-containing protein 35.